Consider the following 310-residue polypeptide: Protein-L-isoaspartate O-methyltransferase (310 aa).

Disordered stretches follow at residues 1–46 (MSGE…DKPA) and 60–79 (ALPG…TVLK). Basic and acidic residues predominate over residues 14–34 (EDLKRAPRKSEVRSGSGERHA). Low complexity predominate over residues 35-46 (ASAVPKAADKPA). Residue serine 157 is part of the active site.

It belongs to the methyltransferase superfamily. L-isoaspartyl/D-aspartyl protein methyltransferase family.

It is found in the cytoplasm. It catalyses the reaction [protein]-L-isoaspartate + S-adenosyl-L-methionine = [protein]-L-isoaspartate alpha-methyl ester + S-adenosyl-L-homocysteine. Catalyzes the methyl esterification of L-isoaspartyl residues in peptides and proteins that result from spontaneous decomposition of normal L-aspartyl and L-asparaginyl residues. It plays a role in the repair and/or degradation of damaged proteins. This chain is Protein-L-isoaspartate O-methyltransferase, found in Burkholderia ambifaria (strain ATCC BAA-244 / DSM 16087 / CCUG 44356 / LMG 19182 / AMMD) (Burkholderia cepacia (strain AMMD)).